A 319-amino-acid polypeptide reads, in one-letter code: Ribonuclease Z (319 aa).

Residues histidine 62, histidine 64, aspartate 66, histidine 67, histidine 139, aspartate 209, and histidine 268 each contribute to the Zn(2+) site. Aspartate 66 (proton acceptor) is an active-site residue.

The protein belongs to the RNase Z family. Homodimer. Zn(2+) serves as cofactor.

The catalysed reaction is Endonucleolytic cleavage of RNA, removing extra 3' nucleotides from tRNA precursor, generating 3' termini of tRNAs. A 3'-hydroxy group is left at the tRNA terminus and a 5'-phosphoryl group is left at the trailer molecule.. In terms of biological role, zinc phosphodiesterase, which displays some tRNA 3'-processing endonuclease activity. Probably involved in tRNA maturation, by removing a 3'-trailer from precursor tRNA. This chain is Ribonuclease Z, found in Pseudomonas putida (strain ATCC 700007 / DSM 6899 / JCM 31910 / BCRC 17059 / LMG 24140 / F1).